Consider the following 401-residue polypeptide: Succinyl-diaminopimelate desuccinylase (401 aa).

His82 contributes to the Zn(2+) binding site. Residue Asp84 is part of the active site. Position 115 (Asp115) interacts with Zn(2+). Glu149 functions as the Proton acceptor in the catalytic mechanism. Zn(2+)-binding residues include Glu150, Glu178, and His364.

This sequence belongs to the peptidase M20A family. DapE subfamily. As to quaternary structure, homodimer. Requires Zn(2+) as cofactor. The cofactor is Co(2+).

The catalysed reaction is N-succinyl-(2S,6S)-2,6-diaminopimelate + H2O = (2S,6S)-2,6-diaminopimelate + succinate. It participates in amino-acid biosynthesis; L-lysine biosynthesis via DAP pathway; LL-2,6-diaminopimelate from (S)-tetrahydrodipicolinate (succinylase route): step 3/3. Its function is as follows. Catalyzes the hydrolysis of N-succinyl-L,L-diaminopimelic acid (SDAP), forming succinate and LL-2,6-diaminopimelate (DAP), an intermediate involved in the bacterial biosynthesis of lysine and meso-diaminopimelic acid, an essential component of bacterial cell walls. This is Succinyl-diaminopimelate desuccinylase from Verminephrobacter eiseniae (strain EF01-2).